The chain runs to 945 residues: Netrin receptor UNC5B (945 aa).

A signal peptide spans 1–26; that stretch reads MRARSGARGALLLALLLCWDPTPSLA. Residues 27-377 are Extracellular-facing; the sequence is GIDSGGQALP…LEPSGDVALY (351 aa). The region spanning 48 to 145 is the Ig-like domain; sequence PHFLLEPEDA…SGTTKSRRAY (98 aa). Disulfide bonds link Cys69–Cys130, Cys81–Cys128, Cys174–Cys225, Cys258–Cys295, Cys262–Cys299, Cys273–Cys285, Cys314–Cys348, Cys318–Cys353, and Cys326–Cys338. The Ig-like C2-type domain maps to 153 to 242; that stretch reads KNFDQEPLAK…KRRSTTATVI (90 aa). Asn222 is a glycosylation site (N-linked (GlcNAc...) asparagine). TSP type-1 domains follow at residues 246 to 300 and 302 to 354; these read NGGW…TVCP and DGAW…GLCV. An N-linked (GlcNAc...) asparagine glycan is attached at Asn347. A helical transmembrane segment spans residues 378-398; sequence AGLVVAVFVVLAVLMAVGVIV. Residues 399-945 lie on the Cytoplasmic side of the membrane; it reads YRRNCRDFDT…LVAMTTDGDC (547 aa). The S-palmitoyl cysteine moiety is linked to residue Cys403. The 144-residue stretch at 543 to 686 folds into the ZU5 domain; the sequence is SSVSGTFGCL…LGTYVFTGES (144 aa). Position 581 is a phosphotyrosine (Tyr581). Residues 689–838 are UPA domain; the sequence is RSAVKRLQLA…AETPAGSLDA (150 aa). Residues 707–725 form an interaction with DCC region; the sequence is SLEYSLRVYCLEDTPAALK. A Death domain is found at 865 to 943; it reads KICNSLDAPN…EMLVAMTTDG (79 aa).

It belongs to the unc-5 family. As to quaternary structure, interacts with the cytoplasmic part of DCC. Interacts with GNAI2 via its cytoplasmic part. Interacts (via death domain) with DAPK1 (via death domain). Interacts (via extracellular domain) with FLRT3 (via extracellular domain); the interaction is direct. Interacts (via extracellular domain) with FLRT2 and FLRT3 (via extracellular domain), but has higher affinity for FLRT3. Identified in a complex with FLRT3 and ADGRL3; does not interact with ADGRL3 by itself. Phosphorylated on cytoplasmic tyrosine residues. In terms of processing, proteolytically cleaved by caspases during apoptosis. The cleavage does not take place when the receptor is associated with netrin ligand. Its cleavage by caspases is required to induce apoptosis. Post-translationally, palmitoylation is required for pro-apoptotic activity, but not for location at lipid rafts. Mainly expressed in regions of differentiating neurons. Expressed in the developing sensory ganglia that flank the spinal cord from E12, peaking at E14. Expressed in the roof plate region of the spinal cord from E14.

Its subcellular location is the cell membrane. It is found in the membrane raft. Functionally, receptor for netrin required for axon guidance. Mediates axon repulsion of neuronal growth cones in the developing nervous system upon ligand binding. Axon repulsion in growth cones may be caused by its association with DCC that may trigger signaling for repulsion. Functions as a netrin receptor that negatively regulates vascular branching during angiogenesis. Mediates retraction of tip cell filopodia on endothelial growth cones in response to netrin. It also acts as a dependence receptor required for apoptosis induction when not associated with netrin ligand. Mediates apoptosis by activating DAPK1. In the absence of NTN1, activates DAPK1 by reducing its autoinhibitory phosphorylation at Ser-308 thereby increasing its catalytic activity. This Rattus norvegicus (Rat) protein is Netrin receptor UNC5B (Unc5b).